Consider the following 288-residue polypeptide: ATP phosphoribosyltransferase (288 aa).

Belongs to the ATP phosphoribosyltransferase family. Long subfamily. It depends on Mg(2+) as a cofactor.

It is found in the cytoplasm. The catalysed reaction is 1-(5-phospho-beta-D-ribosyl)-ATP + diphosphate = 5-phospho-alpha-D-ribose 1-diphosphate + ATP. It functions in the pathway amino-acid biosynthesis; L-histidine biosynthesis; L-histidine from 5-phospho-alpha-D-ribose 1-diphosphate: step 1/9. With respect to regulation, feedback inhibited by histidine. Its function is as follows. Catalyzes the condensation of ATP and 5-phosphoribose 1-diphosphate to form N'-(5'-phosphoribosyl)-ATP (PR-ATP). Has a crucial role in the pathway because the rate of histidine biosynthesis seems to be controlled primarily by regulation of HisG enzymatic activity. In Methanococcus maripaludis (strain C7 / ATCC BAA-1331), this protein is ATP phosphoribosyltransferase.